The following is a 483-amino-acid chain: L-2-hydroxyglutarate dehydrogenase, mitochondrial (483 aa).

The N-terminal 67 residues, 1 to 67 (MKHKPETAAF…VDASKTIVRG (67 aa)), are a transit peptide targeting the mitochondrion.

This sequence belongs to the L2HGDH family. It depends on FAD as a cofactor.

It is found in the mitochondrion. The catalysed reaction is (S)-2-hydroxyglutarate + A = 2-oxoglutarate + AH2. In terms of biological role, catalyzes the oxidation of (S)-2-hydroxyglutarate to 2-oxoglutarate. Is specific for the (S) enantiomer and possesses very poor activity toward (R)-2-hydroxyglutarate. Has no activity toward related 2-hydroxy acids, such as glycolate, L-lactate or D-lactate. This is L-2-hydroxyglutarate dehydrogenase, mitochondrial from Arabidopsis thaliana (Mouse-ear cress).